The chain runs to 477 residues: Cysteine--tRNA ligase (477 aa).

Residue Cys-34 participates in Zn(2+) binding. The short motif at 36–46 (PTVYDFAHIGN) is the 'HIGH' region element. Zn(2+) contacts are provided by Cys-235, His-260, and Glu-264. The short motif at 293–297 (KMSKS) is the 'KMSKS' region element. Lys-296 serves as a coordination point for ATP.

Belongs to the class-I aminoacyl-tRNA synthetase family. Monomer. Zn(2+) is required as a cofactor.

The protein localises to the cytoplasm. The catalysed reaction is tRNA(Cys) + L-cysteine + ATP = L-cysteinyl-tRNA(Cys) + AMP + diphosphate. This Mesorhizobium japonicum (strain LMG 29417 / CECT 9101 / MAFF 303099) (Mesorhizobium loti (strain MAFF 303099)) protein is Cysteine--tRNA ligase.